Here is an 846-residue protein sequence, read N- to C-terminus: Arsenate respiratory reductase molybdopterin-containing subunit ArrA (846 aa).

Positions Met1–Ala29 form a signal peptide, tat-type signal. Residues Gly43 to Asp99 form the 4Fe-4S Mo/W bis-MGD-type domain. The [4Fe-4S] cluster site is built by Cys50, Cys53, Cys57, and Cys85. Arg155 contributes to the arsenite binding site. An arsenate-binding site is contributed by Tyr156. His179 provides a ligand contact to arsenite. Ser180 contacts arsenate. A Mo-bis(molybdopterin guanine dinucleotide)-binding site is contributed by Cys183. Position 188 (Lys188) interacts with arsenate. Tyr200 serves as a coordination point for arsenite.

This sequence belongs to the prokaryotic molybdopterin-containing oxidoreductase family. Heterodimer composed of one large subunit (ArrA) and one small subunit (ArrB). The cofactor is [4Fe-4S] cluster. Mo-bis(molybdopterin guanine dinucleotide) serves as cofactor. In terms of processing, predicted to be exported by the Tat system. The position of the signal peptide cleavage has been experimentally proven.

It is found in the periplasm. It carries out the reaction arsenite + A + H2O = arsenate + AH2 + H(+). Component of the arsenate respiratory reductase (Arr) complex, which catalyzes the reduction of arsenate (As(V)) to arsenite (As(III)). Can use acetate as the electron donor. ArrA is the arsenate-binding subunit. This is Arsenate respiratory reductase molybdopterin-containing subunit ArrA from Chrysiogenes arsenatis.